The primary structure comprises 280 residues: Phosphonates import ATP-binding protein PhnC (280 aa).

The ABC transporter domain occupies 2–245 (FELKNVTRRF…AVKEIYGTDK (244 aa)). 34–41 (GRSGAGKS) lines the ATP pocket. Positions 257–280 (TSLESKRRAEDVSSGRVAKAAAVH) are disordered. Residues 260 to 269 (ESKRRAEDVS) are compositionally biased toward basic and acidic residues.

The protein belongs to the ABC transporter superfamily. Phosphonates importer (TC 3.A.1.9.1) family. In terms of assembly, the complex is composed of two ATP-binding proteins (PhnC), two transmembrane proteins (PhnE) and a solute-binding protein (PhnD).

The protein resides in the cell inner membrane. The enzyme catalyses phosphonate(out) + ATP + H2O = phosphonate(in) + ADP + phosphate + H(+). Functionally, part of the ABC transporter complex PhnCDE involved in phosphonates import. Responsible for energy coupling to the transport system. The chain is Phosphonates import ATP-binding protein PhnC from Rhizobium johnstonii (strain DSM 114642 / LMG 32736 / 3841) (Rhizobium leguminosarum bv. viciae).